The following is a 44-amino-acid chain: Photosystem I reaction center subunit IX (44 aa).

The chain crosses the membrane as a helical span at residues 9 to 29 (FIRSAPVVAAVWLSLTAGIII).

The protein belongs to the PsaJ family.

Its subcellular location is the cellular thylakoid membrane. Its function is as follows. May help in the organization of the PsaE and PsaF subunits. The protein is Photosystem I reaction center subunit IX of Prochlorococcus marinus subsp. pastoris (strain CCMP1986 / NIES-2087 / MED4).